Consider the following 205-residue polypeptide: uncharacterized protein (205 aa).

This is an uncharacterized protein from Orgyia pseudotsugata (Douglas-fir tussock moth).